Reading from the N-terminus, the 332-residue chain is L-lactate dehydrogenase A chain (332 aa).

Ala2 is subject to N-acetylalanine. Position 5 is an N6-acetyllysine; alternate (Lys5). The residue at position 5 (Lys5) is an N6-succinyllysine; alternate. Lys14 is modified (N6-acetyllysine). The residue at position 18 (Thr18) is a Phosphothreonine. 29–57 (GAVGMACAISILMKDLADELALVDVIEDK) lines the NAD(+) pocket. Lys57 is modified (N6-acetyllysine; alternate). Lys57 is covalently cross-linked (Glycyl lysine isopeptide (Lys-Gly) (interchain with G-Cter in SUMO2); alternate). Lys81 carries the N6-acetyllysine modification. Arg99 serves as a coordination point for NAD(+). Substrate is bound at residue Arg106. Lys118 carries the N6-acetyllysine; alternate modification. The residue at position 118 (Lys118) is an N6-succinyllysine; alternate. Lys126 bears the N6-acetyllysine mark. Substrate-binding residues include Asn138 and Arg169. The Proton acceptor role is filled by His193. An N6-acetyllysine mark is found at Lys224 and Lys232. At Tyr239 the chain carries Phosphotyrosine. Lys243 is subject to N6-acetyllysine. Substrate is bound at residue Thr248. The residue at position 309 (Thr309) is a Phosphothreonine. Ser310 bears the Phosphoserine mark. The residue at position 318 (Lys318) is an N6-acetyllysine; alternate. The residue at position 318 (Lys318) is an N6-succinyllysine; alternate. Thr322 is subject to Phosphothreonine.

It belongs to the LDH/MDH superfamily. LDH family. In terms of assembly, homotetramer. Interacts with PTEN upstream reading frame protein MP31. Post-translationally, ISGylated.

The protein localises to the cytoplasm. It carries out the reaction (S)-lactate + NAD(+) = pyruvate + NADH + H(+). Its pathway is fermentation; pyruvate fermentation to lactate; (S)-lactate from pyruvate: step 1/1. Functionally, interconverts simultaneously and stereospecifically pyruvate and lactate with concomitant interconversion of NADH and NAD(+). This Pongo abelii (Sumatran orangutan) protein is L-lactate dehydrogenase A chain (LDHA).